The following is a 94-amino-acid chain: Small ribosomal subunit protein uS19m (94 aa).

Belongs to the universal ribosomal protein uS19 family.

It localises to the mitochondrion. The sequence is that of Small ribosomal subunit protein uS19m (RPS19) from Petunia hybrida (Petunia).